Here is a 236-residue protein sequence, read N- to C-terminus: UPF0280 protein Mlab_0453 (236 aa).

Belongs to the UPF0280 family.

In Methanocorpusculum labreanum (strain ATCC 43576 / DSM 4855 / Z), this protein is UPF0280 protein Mlab_0453.